We begin with the raw amino-acid sequence, 816 residues long: Leucine--tRNA ligase (816 aa).

The short motif at 40–51 is the 'HIGH' region element; that stretch reads SYPSGSQLHAGH. The short motif at 576–580 is the 'KMSKS' region element; it reads KMSKS. Position 579 (Lys579) interacts with ATP.

It belongs to the class-I aminoacyl-tRNA synthetase family.

Its subcellular location is the cytoplasm. It carries out the reaction tRNA(Leu) + L-leucine + ATP = L-leucyl-tRNA(Leu) + AMP + diphosphate. In Clostridium perfringens (strain ATCC 13124 / DSM 756 / JCM 1290 / NCIMB 6125 / NCTC 8237 / Type A), this protein is Leucine--tRNA ligase.